We begin with the raw amino-acid sequence, 242 residues long: 7-cyano-7-deazaguanine synthase (242 aa).

The interval 1 to 22 (MNSSSNEKNKDLNRKNFSSKTD) is disordered. 32 to 42 (LSGGLDSTTCL) contributes to the ATP binding site. Positions 212, 221, 224, and 227 each coordinate Zn(2+).

It belongs to the QueC family. It depends on Zn(2+) as a cofactor.

It catalyses the reaction 7-carboxy-7-deazaguanine + NH4(+) + ATP = 7-cyano-7-deazaguanine + ADP + phosphate + H2O + H(+). It functions in the pathway purine metabolism; 7-cyano-7-deazaguanine biosynthesis. Catalyzes the ATP-dependent conversion of 7-carboxy-7-deazaguanine (CDG) to 7-cyano-7-deazaguanine (preQ(0)). In Leptospira interrogans serogroup Icterohaemorrhagiae serovar copenhageni (strain Fiocruz L1-130), this protein is 7-cyano-7-deazaguanine synthase.